The primary structure comprises 371 residues: AA9 family lytic polysaccharide monooxygenase B (371 aa).

A signal peptide spans 1–25 (MSIAKIAGVVLGSAALVAGHGYVSG). 2 residues coordinate Cu(2+): histidine 20 and histidine 104. 2 disulfides stabilise this stretch: cysteine 74/cysteine 194 and cysteine 115/cysteine 119. N-linked (GlcNAc...) asparagine glycosylation occurs at asparagine 154. O2 contacts are provided by histidine 180 and glutamine 189. Residue tyrosine 191 participates in Cu(2+) binding. The segment at 304–332 (HVQATSSSAAASTPTASSGASSGSGSSSS) is disordered. Residues 307–332 (ATSSSAAASTPTASSGASSGSGSSSS) show a composition bias toward low complexity.

It belongs to the polysaccharide monooxygenase AA9 family. Cu(2+) is required as a cofactor.

It is found in the secreted. The catalysed reaction is [(1-&gt;4)-beta-D-glucosyl]n+m + reduced acceptor + O2 = 4-dehydro-beta-D-glucosyl-[(1-&gt;4)-beta-D-glucosyl]n-1 + [(1-&gt;4)-beta-D-glucosyl]m + acceptor + H2O.. Functionally, lytic polysaccharide monooxygenase (LPMO) that depolymerizes crystalline and amorphous polysaccharides via the oxidation of scissile alpha- or beta-(1-4)-glycosidic bonds, yielding C1 and C4 oxidation products. Catalysis by LPMOs requires the reduction of the active-site copper from Cu(II) to Cu(I) by a reducing agent and H(2)O(2) or O(2) as a cosubstrate. In addition to cellulose, also cleaves the beta-(1!4)-glucan backbone of tamarind xyloglucan, irrespective of substitutions which contrasts with AA9A xyloglucan cleavage activity. This Aspergillus tamarii protein is AA9 family lytic polysaccharide monooxygenase B.